We begin with the raw amino-acid sequence, 425 residues long: Serine--tRNA ligase (425 aa).

232–234 contacts L-serine; it reads TAE. ATP-binding positions include 263 to 265 and Val279; that span reads RRE. Glu286 provides a ligand contact to L-serine. 350–353 serves as a coordination point for ATP; that stretch reads EVVS. Thr387 serves as a coordination point for L-serine.

This sequence belongs to the class-II aminoacyl-tRNA synthetase family. Type-1 seryl-tRNA synthetase subfamily. Homodimer. The tRNA molecule binds across the dimer.

The protein localises to the cytoplasm. The catalysed reaction is tRNA(Ser) + L-serine + ATP = L-seryl-tRNA(Ser) + AMP + diphosphate + H(+). It carries out the reaction tRNA(Sec) + L-serine + ATP = L-seryl-tRNA(Sec) + AMP + diphosphate + H(+). It functions in the pathway aminoacyl-tRNA biosynthesis; selenocysteinyl-tRNA(Sec) biosynthesis; L-seryl-tRNA(Sec) from L-serine and tRNA(Sec): step 1/1. In terms of biological role, catalyzes the attachment of serine to tRNA(Ser). Is also able to aminoacylate tRNA(Sec) with serine, to form the misacylated tRNA L-seryl-tRNA(Sec), which will be further converted into selenocysteinyl-tRNA(Sec). In Methanocorpusculum labreanum (strain ATCC 43576 / DSM 4855 / Z), this protein is Serine--tRNA ligase.